Here is a 185-residue protein sequence, read N- to C-terminus: Ribosome-recycling factor (185 aa).

It belongs to the RRF family.

Its subcellular location is the cytoplasm. In terms of biological role, responsible for the release of ribosomes from messenger RNA at the termination of protein biosynthesis. May increase the efficiency of translation by recycling ribosomes from one round of translation to another. In Xylella fastidiosa (strain Temecula1 / ATCC 700964), this protein is Ribosome-recycling factor.